A 104-amino-acid polypeptide reads, in one-letter code: Transcription elongation factor A protein-like 9 (104 aa).

The span at 1–27 shows a compositional bias: basic and acidic residues; the sequence is MKSCQKMEGKPENESEPKHEEEPKPEE. The interval 1–44 is disordered; it reads MKSCQKMEGKPENESEPKHEEEPKPEEKPEEEEKLEEEAKAKGT.

It belongs to the TFS-II family. TFA subfamily.

The protein localises to the nucleus. Its function is as follows. May be involved in transcriptional regulation. The polypeptide is Transcription elongation factor A protein-like 9 (Homo sapiens (Human)).